The primary structure comprises 340 residues: Dihydroorotate dehydrogenase (quinone) (340 aa).

Residues alanine 62 to lysine 66 and threonine 86 each bind FMN. Lysine 66 provides a ligand contact to substrate. Asparagine 111 to phenylalanine 115 contributes to the substrate binding site. Residues asparagine 139 and asparagine 172 each contribute to the FMN site. Asparagine 172 lines the substrate pocket. The Nucleophile role is filled by serine 175. Substrate is bound at residue asparagine 177. FMN contacts are provided by lysine 217 and threonine 245. Asparagine 246–threonine 247 lines the substrate pocket. FMN is bound by residues glycine 268, glycine 297, and tyrosine 318–serine 319.

It belongs to the dihydroorotate dehydrogenase family. Type 2 subfamily. Monomer. It depends on FMN as a cofactor.

Its subcellular location is the cell membrane. The enzyme catalyses (S)-dihydroorotate + a quinone = orotate + a quinol. It participates in pyrimidine metabolism; UMP biosynthesis via de novo pathway; orotate from (S)-dihydroorotate (quinone route): step 1/1. Catalyzes the conversion of dihydroorotate to orotate with quinone as electron acceptor. The protein is Dihydroorotate dehydrogenase (quinone) of Shewanella woodyi (strain ATCC 51908 / MS32).